A 67-amino-acid polypeptide reads, in one-letter code: V-type proton ATPase subunit e (67 aa).

Residues 1-2 are Lumenal-facing; the sequence is MG. The helical transmembrane segment at 3–23 threads the bilayer; that stretch reads GLVVLLVGLLTALMSVVSYYV. Residues 24–35 are Cytoplasmic-facing; sequence SPKGNNTSTWQM. Residues 36–56 form a helical membrane-spanning segment; the sequence is SLILTFSCCYLLWAITYLAQL. Residues 57–67 are Lumenal-facing; that stretch reads HPLEAPSRVLE.

The protein belongs to the V-ATPase e1/e2 subunit family. As to quaternary structure, V-ATPase is a heteromultimeric enzyme composed of a peripheral catalytic V1 complex (components A to H) attached to an integral membrane V0 proton pore complex (components: a, c, c', c'', d, e, f and VOA1).

The protein localises to the vacuole membrane. In terms of biological role, subunit of the V0 complex of vacuolar(H+)-ATPase (V-ATPase), a multisubunit enzyme composed of a peripheral complex (V1) that hydrolyzes ATP and a membrane integral complex (V0) that translocates protons. V-ATPase is responsible for acidifying and maintaining the pH of intracellular compartments. This Schizosaccharomyces pombe (strain 972 / ATCC 24843) (Fission yeast) protein is V-type proton ATPase subunit e (vma9).